The following is a 586-amino-acid chain: Arginine--tRNA ligase (586 aa).

Residues 133–143 carry the 'HIGH' region motif; sequence ANPTGPLNIVS.

Belongs to the class-I aminoacyl-tRNA synthetase family. As to quaternary structure, monomer.

The protein localises to the cytoplasm. It catalyses the reaction tRNA(Arg) + L-arginine + ATP = L-arginyl-tRNA(Arg) + AMP + diphosphate. This chain is Arginine--tRNA ligase, found in Leptospira interrogans serogroup Icterohaemorrhagiae serovar Lai (strain 56601).